Reading from the N-terminus, the 62-residue chain is Omega-lycotoxin-Am1e (62 aa).

The propeptide occupies 1–15; that stretch reads EDEVEETLPVAEEGR. 4 cysteine pairs are disulfide-bonded: cysteine 19–cysteine 34, cysteine 26–cysteine 39, cysteine 33–cysteine 59, and cysteine 41–cysteine 57.

It belongs to the neurotoxin omega-lctx family. In terms of tissue distribution, expressed by the venom gland.

The protein localises to the secreted. Its function is as follows. Modulates Cav2.1/CACNA1A voltage-gated calcium channels (P/Q-type currents) in rat cerebellar Purkinje cells and hippocampal CA1-CA3 neurons. At saturating concentrations (&gt;10 nM) decelerates activation kinetics and slightly increases peak amplitude without affecting deactivation kinetics. In vivo, does not cause death when intravenously injected into mice. In rat models, through its activity on Cav2.1/CACNA1A, has an ameliorative effect on memory defects provoked by hyperstimulation of N-methyl-D-aspartate receptors (NMDARs) in the hippocampus. This Alopecosa marikovskyi (Wolf spider) protein is Omega-lycotoxin-Am1e.